A 409-amino-acid chain; its full sequence is 4-hydroxy-3-methylbut-2-en-1-yl diphosphate synthase (flavodoxin) (409 aa).

Positions 298, 301, 344, and 351 each coordinate [4Fe-4S] cluster.

It belongs to the IspG family. [4Fe-4S] cluster serves as cofactor.

The catalysed reaction is (2E)-4-hydroxy-3-methylbut-2-enyl diphosphate + oxidized [flavodoxin] + H2O + 2 H(+) = 2-C-methyl-D-erythritol 2,4-cyclic diphosphate + reduced [flavodoxin]. Its pathway is isoprenoid biosynthesis; isopentenyl diphosphate biosynthesis via DXP pathway; isopentenyl diphosphate from 1-deoxy-D-xylulose 5-phosphate: step 5/6. Converts 2C-methyl-D-erythritol 2,4-cyclodiphosphate (ME-2,4cPP) into 1-hydroxy-2-methyl-2-(E)-butenyl 4-diphosphate. The protein is 4-hydroxy-3-methylbut-2-en-1-yl diphosphate synthase (flavodoxin) of Dechloromonas aromatica (strain RCB).